Consider the following 189-residue polypeptide: Phosphoheptose isomerase (189 aa).

Residues 33–189 (CTDTLKAGNK…ELVEREIYGG (157 aa)) form the SIS domain. 48-50 (NGG) provides a ligand contact to substrate. Residues histidine 57 and glutamate 61 each contribute to the Zn(2+) site. Substrate is bound by residues glutamate 61, 90–91 (ND), 116–118 (STS), serine 121, and glutamine 168. The Zn(2+) site is built by glutamine 168 and histidine 176.

It belongs to the SIS family. GmhA subfamily. It depends on Zn(2+) as a cofactor.

It is found in the cytoplasm. It carries out the reaction 2 D-sedoheptulose 7-phosphate = D-glycero-alpha-D-manno-heptose 7-phosphate + D-glycero-beta-D-manno-heptose 7-phosphate. It participates in carbohydrate biosynthesis; D-glycero-D-manno-heptose 7-phosphate biosynthesis; D-glycero-alpha-D-manno-heptose 7-phosphate and D-glycero-beta-D-manno-heptose 7-phosphate from sedoheptulose 7-phosphate: step 1/1. In terms of biological role, catalyzes the isomerization of sedoheptulose 7-phosphate in D-glycero-D-manno-heptose 7-phosphate. The chain is Phosphoheptose isomerase from Akkermansia muciniphila (strain ATCC BAA-835 / DSM 22959 / JCM 33894 / BCRC 81048 / CCUG 64013 / CIP 107961 / Muc).